The sequence spans 239 residues: MNEESTRYVDVNYSDLDKELTYTTSEVAEILNENESTIRYWCDCFSDYIHIEREGRNRKFTKSNIDDLAFTKELLKKERLTIKQAQKRWEHIKTQPSQNTKVISTTETTSQENVLNEQALLKLEEIKKQFLNDISTQINNTISQQLSTALNAHNEALEQTKVELKDYISATIEDKLEANISNLKAHIDATTENTNKQIHQIYDKDVELVNDLKKHMEERKQQNEEQNNKKGFFGKLFKR.

Residues I138–R239 form a required to bind TubZ region. Residues L150–K229 are a coiled coil. Residues E217–N228 are compositionally biased toward basic and acidic residues. Residues E217–R239 form a disordered region. Low complexity predominate over residues K229–R239.

In terms of assembly, forms homooctamers in the absence of the last 13 residues; the coiled coil domain is required for oligomerization. In the presence of GTP and Mg(2+) binds to TubZ and also to TubZ-TubR-tubC DNA; the latter is reshaped from large filament bundles to rings of 30-40 nm diameter.

It is found in the host cytoplasm. A probable TubZ filament regulator that is part of the type III partition system presumably used to ensure correct segregation of this bacteriophage. Binds to TubZ in the presence of GTP and Mg(2+), and to TubZ-TubR-tubC (tubC is the centromere-like site). The latter complex is reshaped from large bundles to rings by TubY. Modifies TubZ filaments formed in the presence of GDP to make them thinner and more flexible; in GDP and lacking the last 8 residues of TubZ makes rings without TubT-tubC. The sequence is that of Regulator protein TubY from Clostridium botulinum C (Clostridium botulinum C bacteriophage).